Reading from the N-terminus, the 344-residue chain is Unsaturated rhamnogalacturonyl hydrolase YesR (344 aa).

Substrate is bound by residues 30-31, asparagine 74, and 118-128; these read DW and QHTVNAAEYVF. Aspartate 135 serves as the catalytic Proton donor. Substrate contacts are provided by residues 198 to 202 and 308 to 309; these read RANGW and NA.

The protein belongs to the glycosyl hydrolase 105 family. In terms of assembly, monomer.

It localises to the cytoplasm. It carries out the reaction 2-O-(4-deoxy-beta-L-threo-hex-4-enopyranuronosyl)-alpha-L-rhamnose + H2O = 5-dehydro-4-deoxy-D-glucuronate + L-rhamnopyranose. In terms of biological role, catalyzes the hydrolysis of unsaturated rhamnogalacturonan disaccharide to yield unsaturated D-galacturonic acid and L-rhamnose. It cannot act on unsaturated glucuronyl hydrolase (UGL) substrates containing unsaturated D-glucuronic acid at the non-reducing terminus, although the active pockets of YesR and UGL are very similar. In Bacillus subtilis (strain 168), this protein is Unsaturated rhamnogalacturonyl hydrolase YesR (yesR).